The chain runs to 234 residues: Transcriptional regulatory protein WalR (234 aa).

The region spanning 3-116 (KILIVDDEKP…ELQARVKALL (114 aa)) is the Response regulatory domain. Asp-52 is modified (4-aspartylphosphate). The segment at residues 133–232 (PQPIQIGDLE…RRGVGYYMRN (100 aa)) is a DNA-binding region (ompR/PhoB-type).

Monomer. Homodimer. Phosphorylated by WalK; can also be dephosphorylated by WalK.

It localises to the cytoplasm. In terms of biological role, member of the two-component regulatory system WalK/WalR that regulates genes involved in cell wall metabolism. Binds to the promoter region of the transcription factor fabT gene in the fabTH-acp operon in vitro. Inhibits transcription of fabT, probably acting in an unphosphorylated form, thereby playing a role in the regulation of fatty acid biosynthesis. Essential for normal growth in vitro. Required for maintaining normal cellular morphology, acting, at least in part, by regulating peptidoglycan hydrolase pcsB. Involved in maintaining expression of WalRK regulon genes in exponentially growing cells. The chain is Transcriptional regulatory protein WalR from Streptococcus pneumoniae serotype 2 (strain D39 / NCTC 7466).